A 52-amino-acid polypeptide reads, in one-letter code: Sperm protamine P1 (52 aa).

It belongs to the protamine P1 family. As to quaternary structure, cross-linked by interchain disulfide bonds around the DNA-helix. As to expression, testis.

It is found in the nucleus. It localises to the chromosome. In terms of biological role, protamines substitute for histones in the chromatin of sperm during the haploid phase of spermatogenesis. They compact sperm DNA into a highly condensed, stable and inactive complex. This is Sperm protamine P1 (PRM1) from Alouatta seniculus (Red howler monkey).